An 889-amino-acid chain; its full sequence is Mitochondrial intermediate peptidase (889 aa).

The transit peptide at 1-30 (MASTSKNAQRAAASVAHSYHVCLARRMSRL) directs the protein to the mitochondrion. Positions 60–112 (SSSLAAQRVQRPTSAGPILTNPISDHEKDNDELRSLFDAPPTSSSANHLRSSG) are disordered. The span at 83–94 (SDHEKDNDELRS) shows a compositional bias: basic and acidic residues. Residues 100–112 (PTSSSANHLRSSG) show a composition bias toward polar residues. A Zn(2+)-binding site is contributed by His670. Glu671 is an active-site residue. The Zn(2+) site is built by His674 and His677.

It belongs to the peptidase M3 family. It depends on Zn(2+) as a cofactor.

Its subcellular location is the mitochondrion matrix. The enzyme catalyses Release of an N-terminal octapeptide as second stage of processing of some proteins imported into the mitochondrion.. Cleaves proteins, imported into the mitochondrion, to their mature size. While most mitochondrial precursor proteins are processed to the mature form in one step by mitochondrial processing peptidase (MPP), the sequential cleavage by MIP of an octapeptide after initial processing by MPP is a required step for a subgroup of nuclear-encoded precursor proteins destined for the matrix or the inner membrane. The sequence is that of Mitochondrial intermediate peptidase (OCT1) from Mycosarcoma maydis (Corn smut fungus).